Reading from the N-terminus, the 201-residue chain is Putative manganese efflux pump MntP (201 aa).

A run of 5 helical transmembrane segments spans residues 6–26 (CLAVAVALAMDAFAVAIATGI), 39–59 (LAFHFGLFQALMPVAGWTLGL), 105–125 (LTLIMLAVATSIDALAVGLSL), 127–147 (VLGIDIVTPAIVIGVVCLLFT), and 169–189 (LAGGVVLIGIGLRILYEHGVF).

The protein belongs to the MntP (TC 9.B.29) family.

The protein resides in the cell inner membrane. Probably functions as a manganese efflux pump. This is Putative manganese efflux pump MntP from Nitratidesulfovibrio vulgaris (strain ATCC 29579 / DSM 644 / CCUG 34227 / NCIMB 8303 / VKM B-1760 / Hildenborough) (Desulfovibrio vulgaris).